A 346-amino-acid polypeptide reads, in one-letter code: Aspartate-semialdehyde dehydrogenase (346 aa).

Residues 10-13 and 38-39 each bind NADP(+); these read TGQG and RS. Arg-98 contacts phosphate. The active-site Acyl-thioester intermediate is Cys-131. Gln-158 contacts substrate. NADP(+) is bound at residue 161–162; it reads SG. Lys-228 contributes to the phosphate binding site. Arg-250 contacts substrate. The active-site Proton acceptor is His-257. Asn-326 provides a ligand contact to NADP(+).

It belongs to the aspartate-semialdehyde dehydrogenase family. In terms of assembly, homodimer.

It carries out the reaction L-aspartate 4-semialdehyde + phosphate + NADP(+) = 4-phospho-L-aspartate + NADPH + H(+). It participates in amino-acid biosynthesis; L-lysine biosynthesis via DAP pathway; (S)-tetrahydrodipicolinate from L-aspartate: step 2/4. The protein operates within amino-acid biosynthesis; L-methionine biosynthesis via de novo pathway; L-homoserine from L-aspartate: step 2/3. Its pathway is amino-acid biosynthesis; L-threonine biosynthesis; L-threonine from L-aspartate: step 2/5. Its function is as follows. Catalyzes the NADPH-dependent formation of L-aspartate-semialdehyde (L-ASA) by the reductive dephosphorylation of L-aspartyl-4-phosphate. The chain is Aspartate-semialdehyde dehydrogenase from Mycolicibacterium smegmatis (Mycobacterium smegmatis).